The chain runs to 813 residues: Receptor-like protein 48 (813 aa).

The signal sequence occupies residues 1 to 30 (MHSCSERRMMTVIWSLCLIFCLSNSILAIA). At 31–786 (KDLCLPDQRD…EDEEKEEKNQ (756 aa)) the chain is on the extracellular side. N-linked (GlcNAc...) asparagine glycosylation is found at Asn69, Asn105, and Asn123. LRR repeat units lie at residues 111–134 (LQHLQSLELSSNNISGILPDSIGN), 136–159 (KYLRSLSFRTCHLFGKIPSSLGSL), and 160–182 (SYLTHLDLSYNDFTSEGPDSGGN). 2 N-linked (GlcNAc...) asparagine glycosylation sites follow: Asn195 and Asn216. 21 LRR repeats span residues 196-219 (LSSVTWIDLGSNQLKGMLPSNMSS), 220-244 (LSKLVSFDISENSFSGSIPSSLFMI), 245-260 (PSLNFSGPLEIGNISS), 261-285 (HSELGYLYMGENNFNGPIPGSLSKL), 288-310 (LRDLSLSFWNTGRGIVDFSIFLH), 311-335 (LKSLCSLDLSYLNTRSMVDLSFFSH), 336-359 (LMSLDELDLSGINLKISSTLSFPS), 361-381 (TGTLILASCNIVEFPKFLENQ), 382-405 (TSLFYLDISANHIEGQVPEWLWRL), 406-432 (PTLSFVNIAQNSFSGELPMLPNSIYSF), 434-450 (ASDNQFSGEIPRTVCEL), 451-473 (VSLNTLVLSNNKFSGSIPRCFEN), 475-498 (KTISILHLRNNSLSGVFPKEIISE), 500-521 (LTSLDVGHNWLSGQLPKSLIKC), 523-544 (DLEFLNVEDNRINDKFPFWLRS), 545-571 (LSNLQILVLRSNEFYGPIFSLEDSLSF), 572-595 (PKLRIFDISENHFTGVLPSDYFAG), 642-666 (FTIYKTIDVSGNRLEGDIPESIGIL), 667-690 (KELIVLNMSNNAFTGHIPPSLSNL), 691-714 (SNLQSLDLSQNRLSGSIPPELGKL), and 716-739 (FLEWMNFSYNRLEGPIPQATQIQS). Asn248 and Asn257 each carry an N-linked (GlcNAc...) asparagine glycan. N-linked (GlcNAc...) asparagine glycosylation occurs at Asn380. An N-linked (GlcNAc...) asparagine glycan is attached at Asn484. N-linked (GlcNAc...) asparagine glycosylation is found at Asn673 and Asn689. Residues Asn721 and Asn741 are each glycosylated (N-linked (GlcNAc...) asparagine). A disordered region spans residues 756 to 785 (FLNKCGGEEEEEEEATKQEEDEDEEKEEKN). The segment covering 763–781 (EEEEEEEATKQEEDEDEEK) has biased composition (acidic residues). A helical transmembrane segment spans residues 787-807 (VFSWIAAAIGYVPGVFCGLTI). The Cytoplasmic segment spans residues 808-813 (AHILTS).

This sequence belongs to the RLP family.

The protein localises to the cell membrane. Its function is as follows. Plays a role in root hair development. This Arabidopsis thaliana (Mouse-ear cress) protein is Receptor-like protein 48.